The sequence spans 345 residues: RNA polymerase II holoenzyme cyclin-like subunit (345 aa).

The Cyclin N-terminal domain occupies 53–144 (QQINRLGKRM…IGECEFYLIS (92 aa)). The disordered stretch occupies residues 256–285 (GLTPQSSSGLQAMLPPQSPAGEGPAEGNKN).

This sequence belongs to the cyclin family. Cyclin C subfamily. As to quaternary structure, component of the srb8-11 complex, a regulatory module of the Mediator complex.

Its subcellular location is the nucleus. In terms of biological role, component of the srb8-11 complex. The srb8-11 complex is a regulatory module of the Mediator complex which is itself involved in regulation of basal and activated RNA polymerase II-dependent transcription. The srb8-11 complex may be involved in the transcriptional repression of a subset of genes regulated by Mediator. It may inhibit the association of the Mediator complex with RNA polymerase II to form the holoenzyme complex. The srb8-11 complex phosphorylates the C-terminal domain (CTD) of the largest subunit of RNA polymerase II. The polypeptide is RNA polymerase II holoenzyme cyclin-like subunit (ssn8) (Neurospora crassa (strain ATCC 24698 / 74-OR23-1A / CBS 708.71 / DSM 1257 / FGSC 987)).